A 284-amino-acid polypeptide reads, in one-letter code: Bifunctional protein FolD (284 aa).

NADP(+) is bound by residues 165–167 (GRS), S190, and I231.

Belongs to the tetrahydrofolate dehydrogenase/cyclohydrolase family. Homodimer.

The catalysed reaction is (6R)-5,10-methylene-5,6,7,8-tetrahydrofolate + NADP(+) = (6R)-5,10-methenyltetrahydrofolate + NADPH. It catalyses the reaction (6R)-5,10-methenyltetrahydrofolate + H2O = (6R)-10-formyltetrahydrofolate + H(+). It functions in the pathway one-carbon metabolism; tetrahydrofolate interconversion. In terms of biological role, catalyzes the oxidation of 5,10-methylenetetrahydrofolate to 5,10-methenyltetrahydrofolate and then the hydrolysis of 5,10-methenyltetrahydrofolate to 10-formyltetrahydrofolate. The chain is Bifunctional protein FolD from Streptococcus thermophilus (strain CNRZ 1066).